A 383-amino-acid polypeptide reads, in one-letter code: Putative [LysW]-aminoadipate semialdehyde/glutamate semialdehyde transaminase (383 aa).

Residues 97–98 and phenylalanine 124 contribute to the pyridoxal 5'-phosphate site; that span reads GT. Arginine 127 is a substrate binding site. 209–212 serves as a coordination point for pyridoxal 5'-phosphate; the sequence is DEVQ. Lysine 238 bears the N6-(pyridoxal phosphate)lysine mark. Serine 266 contacts substrate. Pyridoxal 5'-phosphate is bound at residue threonine 267.

The protein belongs to the class-III pyridoxal-phosphate-dependent aminotransferase family. LysJ subfamily. Homodimer. The cofactor is pyridoxal 5'-phosphate.

It is found in the cytoplasm. The enzyme catalyses [amino-group carrier protein]-C-terminal-gamma-(L-lysyl)-L-glutamate + 2-oxoglutarate = [amino-group carrier protein]-C-terminal-N-(1-carboxy-5-oxopentan-1-yl)-L-glutamine + L-glutamate. It catalyses the reaction [amino-group carrier protein]-C-terminal-gamma-(L-ornithyl)-L-glutamate + 2-oxoglutarate = [amino-group carrier protein]-C-terminal-gamma-(L-glutamyl-5-semialdehyde)-L-glutamate + L-glutamate. The protein operates within amino-acid biosynthesis; L-lysine biosynthesis via AAA pathway; L-lysine from L-alpha-aminoadipate (Thermus route): step 4/5. It functions in the pathway amino-acid biosynthesis; L-arginine biosynthesis. Functionally, involved in both the arginine and lysine biosynthetic pathways. This is Putative [LysW]-aminoadipate semialdehyde/glutamate semialdehyde transaminase from Pyrobaculum aerophilum (strain ATCC 51768 / DSM 7523 / JCM 9630 / CIP 104966 / NBRC 100827 / IM2).